The primary structure comprises 118 residues: Large ribosomal subunit protein bL20 (118 aa).

This sequence belongs to the bacterial ribosomal protein bL20 family.

Functionally, binds directly to 23S ribosomal RNA and is necessary for the in vitro assembly process of the 50S ribosomal subunit. It is not involved in the protein synthesizing functions of that subunit. This chain is Large ribosomal subunit protein bL20, found in Acidiphilium cryptum (strain JF-5).